A 266-amino-acid chain; its full sequence is Interleukin-1 beta (266 aa).

Positions 1-113 are excised as a propeptide; sequence MATVPEPINE…ETSSDELLCD (113 aa).

The protein belongs to the IL-1 family. In terms of assembly, monomer. In its precursor form, weakly interacts with full-length MEFV; the mature cytokine does not interact at all. Interacts with integrins ITGAV:ITGBV and ITGA5:ITGB1; integrin-binding is required for IL1B signaling. Interacts with cargo receptor TMED10; the interaction is direct and is required for the secretion of IL1B mature form. Interacts with HSP90AB1; the interaction facilitates cargo translocation into the ERGIC. Interacts with HSP90B1; the interaction facilitates cargo translocation into the ERGIC.

It is found in the cytoplasm. Its subcellular location is the cytosol. The protein resides in the secreted. It localises to the lysosome. The protein localises to the extracellular exosome. Its function is as follows. Potent pro-inflammatory cytokine. Initially discovered as the major endogenous pyrogen, induces prostaglandin synthesis, neutrophil influx and activation, T-cell activation and cytokine production, B-cell activation and antibody production, and fibroblast proliferation and collagen production. Promotes Th17 differentiation of T-cells. Synergizes with IL12/interleukin-12 to induce IFNG synthesis from T-helper 1 (Th1) cells. Plays a role in angiogenesis by inducing VEGF production synergistically with TNF and IL6. Involved in transduction of inflammation downstream of pyroptosis: its mature form is specifically released in the extracellular milieu by passing through the gasdermin-D (GSDMD) pore. The polypeptide is Interleukin-1 beta (IL1B) (Capra hircus (Goat)).